Consider the following 961-residue polypeptide: Transcription factor MYB3R-4 (961 aa).

The interval 1–33 is disordered; sequence MEAESSTPQERIPKLRHGRTSGPARRSTRGQWT. 3 consecutive HTH myb-type domains span residues 24 to 75, 76 to 131, and 132 to 182; these read ARRS…QKVL, NPEL…NPAI, and NKEA…KKKL. DNA-binding regions (H-T-H motif) lie at residues 52–75, 104–127, and 155–178; these read WKKI…QKVL, WSTI…HNHL, and WAEL…HSSV. Disordered stretches follow at residues 390 to 457 and 534 to 555; these read GHSV…LIIS and RPHS…EDMG. Composition is skewed to polar residues over residues 391–405 and 416–430; these read HSVS…NEFN and SSAS…TKSP. Positions 431 to 444 are enriched in low complexity; it reads TQSSSSRFTATAAS. A compositionally biased stretch (basic and acidic residues) spans 534 to 554; the sequence is RPHSLPKHEPNMTNEQHHEDM. Positions 612 to 619 match the Nuclear localization signal motif; it reads GKKTLVGA. The disordered stretch occupies residues 756 to 781; that stretch reads NTGKPVLSTPGQSVTKAEKAQVSTPR. Polar residues predominate over residues 764 to 781; it reads TPGQSVTKAEKAQVSTPR.

In terms of assembly, component of a DREAM-like complex which modulates a variety of developmentally regulated genes and of the mitotic genes in proliferating and differentiated cells. Associates with CDKA-1, RBR1 and E2FB, but not with E2FC, in proliferating cells, at early stages of leaves development. As to expression, expressed in roots, cotyledons and leaves, especially in vascular tissues, and in flowers.

The protein resides in the nucleus. In terms of biological role, transcription factor that binds 5'-AACGG-3' motifs in gene promoters. Involved in the regulation of cytokinesis, probably via the activation of several G2/M phase-specific genes transcription (e.g. KNOLLE). Required for the maintenance of diploidy. Involved in transcription regulation during induced endoreduplication at the powdery mildew (e.g. G.orontii) infection site, thus promoting G.orontii growth and reproduction. The sequence is that of Transcription factor MYB3R-4 from Arabidopsis thaliana (Mouse-ear cress).